Consider the following 91-residue polypeptide: Small ribosomal subunit protein bS20 (91 aa).

A disordered region spans residues 72-91 (KNAASRQKSRLAKKLNGLSA).

It belongs to the bacterial ribosomal protein bS20 family.

Binds directly to 16S ribosomal RNA. The polypeptide is Small ribosomal subunit protein bS20 (Halalkalibacterium halodurans (strain ATCC BAA-125 / DSM 18197 / FERM 7344 / JCM 9153 / C-125) (Bacillus halodurans)).